Reading from the N-terminus, the 572-residue chain is Proline--tRNA ligase (572 aa).

This sequence belongs to the class-II aminoacyl-tRNA synthetase family. ProS type 1 subfamily. As to quaternary structure, homodimer.

The protein resides in the cytoplasm. The enzyme catalyses tRNA(Pro) + L-proline + ATP = L-prolyl-tRNA(Pro) + AMP + diphosphate. Functionally, catalyzes the attachment of proline to tRNA(Pro) in a two-step reaction: proline is first activated by ATP to form Pro-AMP and then transferred to the acceptor end of tRNA(Pro). As ProRS can inadvertently accommodate and process non-cognate amino acids such as alanine and cysteine, to avoid such errors it has two additional distinct editing activities against alanine. One activity is designated as 'pretransfer' editing and involves the tRNA(Pro)-independent hydrolysis of activated Ala-AMP. The other activity is designated 'posttransfer' editing and involves deacylation of mischarged Ala-tRNA(Pro). The misacylated Cys-tRNA(Pro) is not edited by ProRS. The protein is Proline--tRNA ligase of Klebsiella pneumoniae subsp. pneumoniae (strain ATCC 700721 / MGH 78578).